A 385-amino-acid polypeptide reads, in one-letter code: Probable caffeine synthase MTL2 (385 aa).

Residues Y18, C62, N67, D101, L102, S140, F141, and C157 each contribute to the S-adenosyl-L-homocysteine site. Caffeine is bound by residues Y158, H161, and W162. Position 179 (N179) interacts with Mg(2+). T238 contributes to the caffeine binding site. Mg(2+) contacts are provided by D261, F263, and N264. Y369 serves as a coordination point for caffeine.

This sequence belongs to the methyltransferase superfamily. Type-7 methyltransferase family. Mg(2+) serves as cofactor.

Its pathway is alkaloid biosynthesis. May be involved in the biosynthesis of caffeine. This is Probable caffeine synthase MTL2 from Coffea canephora (Robusta coffee).